The primary structure comprises 453 residues: Glutamyl-tRNA reductase (453 aa).

Substrate-binding positions include 49-52, Ser-109, 114-116, and Gln-120; these read TCNR and EQQ. Residue Cys-50 is the Nucleophile of the active site. 191 to 196 contacts NADP(+); it reads GAGSMG. Residues 432 to 453 are disordered; it reads PAAVATPTDLVDGDRTGRDLQA. Residues 443–453 show a composition bias toward basic and acidic residues; that stretch reads DGDRTGRDLQA.

The protein belongs to the glutamyl-tRNA reductase family. As to quaternary structure, homodimer.

It carries out the reaction (S)-4-amino-5-oxopentanoate + tRNA(Glu) + NADP(+) = L-glutamyl-tRNA(Glu) + NADPH + H(+). It functions in the pathway porphyrin-containing compound metabolism; protoporphyrin-IX biosynthesis; 5-aminolevulinate from L-glutamyl-tRNA(Glu): step 1/2. Functionally, catalyzes the NADPH-dependent reduction of glutamyl-tRNA(Glu) to glutamate 1-semialdehyde (GSA). This is Glutamyl-tRNA reductase from Rhodococcus erythropolis (strain PR4 / NBRC 100887).